The sequence spans 1169 residues: Transcription-repair-coupling factor (1169 aa).

Residues 634–795 form the Helicase ATP-binding domain; that stretch reads DMERERPMDR…MLGVRDLSVI (162 aa). Position 647–654 (647–654) interacts with ATP; that stretch reads GDVGYGKT. The DEEQ box signature appears at 748-751; it reads DEEQ. Residues 809–970 form the Helicase C-terminal domain; that stretch reads VLEQNSNFIK…GFKIAMRDLN (162 aa).

In the N-terminal section; belongs to the UvrB family. The protein in the C-terminal section; belongs to the helicase family. RecG subfamily.

Its subcellular location is the cytoplasm. Functionally, couples transcription and DNA repair by recognizing RNA polymerase (RNAP) stalled at DNA lesions. Mediates ATP-dependent release of RNAP and its truncated transcript from the DNA, and recruitment of nucleotide excision repair machinery to the damaged site. In Staphylococcus haemolyticus (strain JCSC1435), this protein is Transcription-repair-coupling factor.